Here is a 262-residue protein sequence, read N- to C-terminus: 1-(5-phosphoribosyl)-5-[(5-phosphoribosylamino)methylideneamino] imidazole-4-carboxamide isomerase (262 aa).

Residue D8 is the Proton acceptor of the active site. The Proton donor role is filled by D129. Positions 243–262 are disordered; sequence KDNVGQEDHSLPRCEPGPRG.

Belongs to the HisA/HisF family.

It localises to the cytoplasm. The catalysed reaction is 1-(5-phospho-beta-D-ribosyl)-5-[(5-phospho-beta-D-ribosylamino)methylideneamino]imidazole-4-carboxamide = 5-[(5-phospho-1-deoxy-D-ribulos-1-ylimino)methylamino]-1-(5-phospho-beta-D-ribosyl)imidazole-4-carboxamide. Its pathway is amino-acid biosynthesis; L-histidine biosynthesis; L-histidine from 5-phospho-alpha-D-ribose 1-diphosphate: step 4/9. The sequence is that of 1-(5-phosphoribosyl)-5-[(5-phosphoribosylamino)methylideneamino] imidazole-4-carboxamide isomerase from Desulforudis audaxviator (strain MP104C).